We begin with the raw amino-acid sequence, 145 residues long: Cytochrome c-type biogenesis protein CcmE (145 aa).

Topologically, residues 1-7 (MKAKHQR) are cytoplasmic. The chain crosses the membrane as a helical; Signal-anchor for type II membrane protein span at residues 8-28 (LILAVAALCGVAGAGVLAASA). Over 29 to 145 (LRDEAAYFRT…PKNMKAAVEG (117 aa)) the chain is Periplasmic. Histidine 123 and tyrosine 127 together coordinate heme.

Belongs to the CcmE/CycJ family.

Its subcellular location is the cell inner membrane. Heme chaperone required for the biogenesis of c-type cytochromes. Transiently binds heme delivered by CcmC and transfers the heme to apo-cytochromes in a process facilitated by CcmF and CcmH. The polypeptide is Cytochrome c-type biogenesis protein CcmE (Sphingopyxis alaskensis (strain DSM 13593 / LMG 18877 / RB2256) (Sphingomonas alaskensis)).